We begin with the raw amino-acid sequence, 368 residues long: MWDMRAVAPQRPAAGHPRAGWPRKLKTAATRFWATCPSSSTVCFLFVIFAVSTVFHCHRRLALVPAPWAYAGHVVLFPRHLPRGGVFTINAKGRLGNQMGEYATLYALAKMNGRAAFIPPQMHSTLAPIFRITLPVLHDATARSVPWQNYHLNDWMEEQYRHIPGEYVRLTGYPCSWTFYHHLRAEILQEFTLHAHVREEAQNFLRGLRVNGSRPSTYVGVHVRRGDYVRVMPTMWKGVLADRGYLQQALDWFRARHHSPLFVITSDDMAWCRRNINSSHRDVVFAGSGQQGSPARDFALLTQCNHTVITVGTFGIWAAYLAGGSTVYLANFTLPGSRFRMIFKPQAAFLPEWVGIAANLGQARESHP.

The tract at residues 1-20 (MWDMRAVAPQRPAAGHPRAG) is disordered. Topologically, residues 1-31 (MWDMRAVAPQRPAAGHPRAGWPRKLKTAATR) are cytoplasmic. A helical transmembrane segment spans residues 32–52 (FWATCPSSSTVCFLFVIFAVS). Over 53-368 (TVFHCHRRLA…NLGQARESHP (316 aa)) the chain is Lumenal.

Belongs to the glycosyltransferase 11 family. In terms of tissue distribution, kidney.

It is found in the golgi apparatus. It localises to the golgi stack membrane. It catalyses the reaction a ganglioside GM1 + GDP-beta-L-fucose = a ganglioside Fuc-GM1 + GDP + H(+). It participates in protein modification; protein glycosylation. Catalyzes the transfer of alpha 1,2-linked fucose to ganglioside GM1 and galacto-N-biose. This is Galactoside 2-alpha-L-fucosyltransferase SEC1 from Bos taurus (Bovine).